We begin with the raw amino-acid sequence, 159 residues long: SsrA-binding protein (159 aa).

This sequence belongs to the SmpB family.

It is found in the cytoplasm. In terms of biological role, required for rescue of stalled ribosomes mediated by trans-translation. Binds to transfer-messenger RNA (tmRNA), required for stable association of tmRNA with ribosomes. tmRNA and SmpB together mimic tRNA shape, replacing the anticodon stem-loop with SmpB. tmRNA is encoded by the ssrA gene; the 2 termini fold to resemble tRNA(Ala) and it encodes a 'tag peptide', a short internal open reading frame. During trans-translation Ala-aminoacylated tmRNA acts like a tRNA, entering the A-site of stalled ribosomes, displacing the stalled mRNA. The ribosome then switches to translate the ORF on the tmRNA; the nascent peptide is terminated with the 'tag peptide' encoded by the tmRNA and targeted for degradation. The ribosome is freed to recommence translation, which seems to be the essential function of trans-translation. This Coxiella burnetii (strain RSA 331 / Henzerling II) protein is SsrA-binding protein.